Consider the following 116-residue polypeptide: Cocaine- and amphetamine-regulated transcript protein (116 aa).

The N-terminal stretch at 1-27 (MESSRVRLLPLLGAALLLMLPLLGTRA) is a signal peptide. Tyr41 bears the Phosphotyrosine mark. Phosphoserine is present on Ser48. 3 disulfide bridges follow: Cys82-Cys100, Cys88-Cys108, and Cys102-Cys115.

It belongs to the CART family. In terms of tissue distribution, hypothalamus. Found in neurons of the ventrolateral part of the arcuate nucleus, in the external zone of the median eminence, and also found in terminals in the periventricular part of the paraventricular nucleus.

The protein resides in the secreted. Its function is as follows. Satiety factor closely associated with the actions of leptin and neuropeptide Y; this anorectic peptide inhibits both normal and starvation-induced feeding and completely blocks the feeding response induced by neuropeptide Y and regulated by leptin in the hypothalamus. It promotes neuronal development and survival in vitro. The polypeptide is Cocaine- and amphetamine-regulated transcript protein (CARTPT) (Homo sapiens (Human)).